A 382-amino-acid chain; its full sequence is Alkanesulfonate monooxygenase (382 aa).

This sequence belongs to the SsuD family.

The catalysed reaction is an alkanesulfonate + FMNH2 + O2 = an aldehyde + FMN + sulfite + H2O + 2 H(+). In terms of biological role, catalyzes the desulfonation of aliphatic sulfonates. The protein is Alkanesulfonate monooxygenase of Pseudomonas putida (strain ATCC 47054 / DSM 6125 / CFBP 8728 / NCIMB 11950 / KT2440).